The following is an 897-amino-acid chain: MSTPHPAPASAYEPGAIEAAAHAHWTARDAHRVVEDTSRPKFYACSMLPYPSGKLHMGHVRNYTINDMMARYLRMKGYNVLMPMGWDAFGLPAENAAIDKKVAPAQWTRDNIADMKSQMQPLGLAFDWSREVATCDPDYYKWNQWFFLKLLEKGIAYKKTQVVNWDPVDQTVLANEQVIDGRGWRSGAPVERREIPGYYLAITQYADELLANVADPASPGFLHGWPERVRLMQEHWIGKSAGVRFAFPHEIRDADGTLVGDGLMHVFTTRADTIMGVTFCAVAPEHPLATHAAASDPDLAAFIETCKAGGTTEAELATKDKEGRPTGLFVKHPLSGAPVPVWVGNYVLMGYGDGAVMGVPAHDERDFAFAKKYGIDILQVVHVDGEHFSYDHWQDWYADKQRGVTINSGNLSGLSYPVAVDAVAAALAAQGLGDKKTTWRLRDWGISRQRYWGTPIPIIHCTGSGPGSDNPGCGDVPVPEQDLPVLLPEDLIPDGSGNPLNKSAAFLNVACPKCGAPAKRETDTMDTFVDSSWYYMRYCCPDSDAAMVDSRNDYWMPMDQYIGGIEHAVLHLLYARFWTKAMRDCGLVKFDEPFTKLFTQGMLLNESYYREDASGKKRWFYPSEVEVQFDDKGHPVGAIAREDGQPVQLGGIEKMSKSKNNVVEPRDIIAKFGADTARLFTMFAGPPDQSAAWSDSGAEGSFRYLRRLWAFATKQREAVQAAGTDFADASRAAIDLRRDVHLLLRQVSHDYDRLQYNTVVSGAMKLLNALESAALADTAADRAALREGLGILLRALYPAAPHIAHALWQDLGYAAAHGDLLDAPWPAVDEQALVQDEIELVLQVNGKLRGALKVPASADRAAIEAAALASPELAKFAEGRTPKKVVVVPGRLVNVVV.

The short motif at 49–59 (PYPSGKLHMGH) is the 'HIGH' region element. The 'KMSKS' region motif lies at 654 to 658 (KMSKS). K657 is an ATP binding site.

The protein belongs to the class-I aminoacyl-tRNA synthetase family.

It is found in the cytoplasm. It carries out the reaction tRNA(Leu) + L-leucine + ATP = L-leucyl-tRNA(Leu) + AMP + diphosphate. The polypeptide is Leucine--tRNA ligase (Methylibium petroleiphilum (strain ATCC BAA-1232 / LMG 22953 / PM1)).